A 236-amino-acid chain; its full sequence is UPF0502 protein BamMC406_5439 (236 aa).

Belongs to the UPF0502 family.

This is UPF0502 protein BamMC406_5439 from Burkholderia ambifaria (strain MC40-6).